The chain runs to 304 residues: UDP-N-acetylenolpyruvoylglucosamine reductase (304 aa).

The region spanning 33-198 (RVGGPVDILL…ITATFCFESG (166 aa)) is the FAD-binding PCMH-type domain. Residue Arg-177 is part of the active site. The active-site Proton donor is Ser-227. Residue Glu-297 is part of the active site.

Belongs to the MurB family. FAD serves as cofactor.

Its subcellular location is the cytoplasm. It carries out the reaction UDP-N-acetyl-alpha-D-muramate + NADP(+) = UDP-N-acetyl-3-O-(1-carboxyvinyl)-alpha-D-glucosamine + NADPH + H(+). Its pathway is cell wall biogenesis; peptidoglycan biosynthesis. In terms of biological role, cell wall formation. The polypeptide is UDP-N-acetylenolpyruvoylglucosamine reductase (Clostridium botulinum (strain Eklund 17B / Type B)).